Here is a 248-residue protein sequence, read N- to C-terminus: Pyruvate formate-lyase-activating enzyme (248 aa).

In terms of domain architecture, Radical SAM core spans 17–248 (VDGPGIRFIV…NKILETSSYK (232 aa)). Residues Cys-31, Cys-35, and Cys-38 each coordinate [4Fe-4S] cluster. S-adenosyl-L-methionine-binding positions include 37–39 (FCH), Gly-80, 135–137 (DIK), and His-208.

This sequence belongs to the organic radical-activating enzymes family. It depends on [4Fe-4S] cluster as a cofactor.

It is found in the cytoplasm. It catalyses the reaction glycyl-[formate C-acetyltransferase] + reduced [flavodoxin] + S-adenosyl-L-methionine = glycin-2-yl radical-[formate C-acetyltransferase] + semiquinone [flavodoxin] + 5'-deoxyadenosine + L-methionine + H(+). Activation of pyruvate formate-lyase under anaerobic conditions by generation of an organic free radical, using S-adenosylmethionine and reduced flavodoxin as cosubstrates to produce 5'-deoxy-adenosine. This chain is Pyruvate formate-lyase-activating enzyme (pflA), found in Listeria innocua serovar 6a (strain ATCC BAA-680 / CLIP 11262).